Here is a 330-residue protein sequence, read N- to C-terminus: Type II methyltransferase M.MthTI (330 aa).

Positions 3–328 constitute an SAM-dependent MTase C5-type domain; the sequence is MDIASFFSGA…KKIKKDLEGV (326 aa). Residue Cys73 is part of the active site.

The protein belongs to the class I-like SAM-binding methyltransferase superfamily. C5-methyltransferase family.

It catalyses the reaction a 2'-deoxycytidine in DNA + S-adenosyl-L-methionine = a 5-methyl-2'-deoxycytidine in DNA + S-adenosyl-L-homocysteine + H(+). Functionally, a methylase that recognizes the double-stranded sequence 5'-GGCC-3', methylates C-3 on both strands, and protects the DNA from cleavage by the MthTI endonuclease. The chain is Type II methyltransferase M.MthTI (mthTIM) from Methanothermobacter thermautotrophicus (Methanobacterium thermoformicicum).